Consider the following 505-residue polypeptide: N-succinylglutamate 5-semialdehyde dehydrogenase (505 aa).

An NAD(+)-binding site is contributed by 234–239 (GSAHTG). Residues Glu257 and Cys291 contribute to the active site.

It belongs to the aldehyde dehydrogenase family. AstD subfamily.

The catalysed reaction is N-succinyl-L-glutamate 5-semialdehyde + NAD(+) + H2O = N-succinyl-L-glutamate + NADH + 2 H(+). It participates in amino-acid degradation; L-arginine degradation via AST pathway; L-glutamate and succinate from L-arginine: step 4/5. Functionally, catalyzes the NAD-dependent reduction of succinylglutamate semialdehyde into succinylglutamate. This Yersinia pestis bv. Antiqua (strain Antiqua) protein is N-succinylglutamate 5-semialdehyde dehydrogenase.